Here is a 374-residue protein sequence, read N- to C-terminus: Histidinol-phosphate aminotransferase 1 (374 aa).

Lys-232 carries the N6-(pyridoxal phosphate)lysine modification.

The protein belongs to the class-II pyridoxal-phosphate-dependent aminotransferase family. Histidinol-phosphate aminotransferase subfamily. As to quaternary structure, homodimer. Requires pyridoxal 5'-phosphate as cofactor.

The catalysed reaction is L-histidinol phosphate + 2-oxoglutarate = 3-(imidazol-4-yl)-2-oxopropyl phosphate + L-glutamate. It participates in amino-acid biosynthesis; L-histidine biosynthesis; L-histidine from 5-phospho-alpha-D-ribose 1-diphosphate: step 7/9. The chain is Histidinol-phosphate aminotransferase 1 (hisC1) from Ralstonia nicotianae (strain ATCC BAA-1114 / GMI1000) (Ralstonia solanacearum).